The following is a 175-amino-acid chain: MFFGERFFTTAMAKVSNKANKIIKKEAVFKRLSENRYAKFQYEILETIEAGIELLGTEVKSIRNGSVNLRDGYCSFRDGEILLLNVHISPHKNVGPFFNHDPLRNRKLLLHKKEIVKLKYNTEKKGLTIIPLSIYLKGSWIKLTIGIGKGKKLHDKRQADKQRDIKREIKTALKR.

It belongs to the SmpB family.

It localises to the cytoplasm. Its function is as follows. Required for rescue of stalled ribosomes mediated by trans-translation. Binds to transfer-messenger RNA (tmRNA), required for stable association of tmRNA with ribosomes. tmRNA and SmpB together mimic tRNA shape, replacing the anticodon stem-loop with SmpB. tmRNA is encoded by the ssrA gene; the 2 termini fold to resemble tRNA(Ala) and it encodes a 'tag peptide', a short internal open reading frame. During trans-translation Ala-aminoacylated tmRNA acts like a tRNA, entering the A-site of stalled ribosomes, displacing the stalled mRNA. The ribosome then switches to translate the ORF on the tmRNA; the nascent peptide is terminated with the 'tag peptide' encoded by the tmRNA and targeted for degradation. The ribosome is freed to recommence translation, which seems to be the essential function of trans-translation. This chain is SsrA-binding protein, found in Prochlorococcus marinus subsp. pastoris (strain CCMP1986 / NIES-2087 / MED4).